We begin with the raw amino-acid sequence, 2773 residues long: Peramine synthetase A (2773 aa).

The interval 246–644 (FEDQVYSQPL…GRKDAQVKIR (399 aa)) is adenylation 1. One can recognise a Carrier 1 domain in the interval 774 to 850 (QPTCEMEERM…DLAKNCSQTL (77 aa)). Ser811 is subject to O-(pantetheine 4'-phosphoryl)serine. The segment at 888–1301 (QDAYPCTRLQ…MSSAEDLEQI (414 aa)) is condensation. The segment at 1321–1720 (ADQVQARPDS…GRKDTQVKVR (400 aa)) is adenylation 2. The methylation (Met) domain stretch occupies residues 1810–1949 (IGRDFVGWSS…IIQHLASLGS (140 aa)). The segment at 2250-2271 (MLSESLQQKAPPTARKRLPSTA) is disordered. One can recognise a Carrier 2 domain in the interval 2267-2345 (LPSTAPERAM…HLLQTAAAGV (79 aa)). The residue at position 2304 (Ser2304) is an O-(pantetheine 4'-phosphoryl)serine. The thiesterase (TE) domain stretch occupies residues 2397 to 2715 (TVVLTGANGF…LQDLADTARS (319 aa)).

The protein belongs to the NRP synthetase family. Pantetheine 4'-phosphate serves as cofactor.

It carries out the reaction (S)-1-pyrroline-5-carboxylate + L-arginine + S-adenosyl-L-methionine + 2 ATP = peramine + 2 AMP + S-adenosyl-L-homocysteine + 2 diphosphate + H2O + 2 H(+). Nonribosomal peptide synthetase involved in the biosynthesis of peramine, a pyrrolopyrazine synthesized in association with the grass host that protects the plant from insect herbivory. The single multifunctional NRPS perA seems to be responsible for all catalytic steps in the biosynthesis of peramine. The condensation domain of perA is proposed to catalyze formation of a peptide bond between 1-pyrroline-5-carboxylate and arginine. The methylation domain of perA would catalyze the N-methylation of the alpha-amino group of arginine. The reductase domain is proposed to be responsible for reduction of the thioester and the cyclization to form an iminium ion resulting in release from the peptide synthetase. Deprotonation of this intermediate and oxidation of the pyrroline ring would give rise to peramine. This final oxidation to give the pyrrole functionality may be spontaneous. This is Peramine synthetase A from Epichloe festucae (strain Fl1).